The following is a 59-amino-acid chain: Large ribosomal subunit protein bL32 (59 aa).

Residues 1 to 59 form a disordered region; it reads MAVQQNKKSPSKRGMHRSHDALTAPALSVDSTTGEVHRPHHISPNGMYRGRKVVKAKGE. A compositionally biased stretch (basic residues) spans 49–59; sequence RGRKVVKAKGE.

Belongs to the bacterial ribosomal protein bL32 family.

This is Large ribosomal subunit protein bL32 (rpmF) from Neisseria meningitidis serogroup B (strain ATCC BAA-335 / MC58).